A 2628-amino-acid chain; its full sequence is Protein FMP27, mitochondrial (2628 aa).

Positions Met-1 to Arg-28 are cleaved as a signal peptide. The segment at Lys-29–Met-192 is transmembrane domain. 9 LRR repeats span residues Phe-160 to Val-182, Pro-213 to Gln-236, Ile-271 to Glu-296, Tyr-306 to Glu-333, Asn-571 to Asn-596, Val-835 to His-857, Phe-1944 to Phe-1967, Phe-2101 to Lys-2125, and Ile-2303 to Lys-2327.

The protein localises to the cell membrane. It localises to the endoplasmic reticulum membrane. It is found in the mitochondrion membrane. Tube-forming lipid transport protein which binds to phosphatidylinositols and affects phosphatidylinositol-4,5-bisphosphate (PtdIns-4,5-P2) distribution. This chain is Protein FMP27, mitochondrial, found in Saccharomyces cerevisiae (strain ATCC 204508 / S288c) (Baker's yeast).